The sequence spans 122 residues: UPF0382 membrane protein SH2409 (122 aa).

A run of 4 helical transmembrane segments spans residues 3 to 23, 46 to 66, 69 to 89, and 98 to 118; these read LFIILGALCTMMSVGTGAFGA, MYHGLGLIIIGVISGTTSINV, AGWLLFLGVVFFSGSLYILAL, and ITPIGGLLFIAGWLMLIISTF.

Belongs to the UPF0382 family.

It is found in the cell membrane. The chain is UPF0382 membrane protein SH2409 from Staphylococcus haemolyticus (strain JCSC1435).